We begin with the raw amino-acid sequence, 233 residues long: Probable GTP-binding protein EngB (233 aa).

An EngB-type G domain is found at 31 to 205; the sequence is TGVEIAFAGR…RRKLDTWFGP (175 aa). GTP contacts are provided by residues 39-46, 66-70, 84-87, 151-154, and 184-186; these read GRSNAGKS, GRTQL, DLPG, TKAD, and FSS. The Mg(2+) site is built by S46 and T68.

The protein belongs to the TRAFAC class TrmE-Era-EngA-EngB-Septin-like GTPase superfamily. EngB GTPase family. It depends on Mg(2+) as a cofactor.

Necessary for normal cell division and for the maintenance of normal septation. This Photobacterium profundum (strain SS9) protein is Probable GTP-binding protein EngB.